Here is a 631-residue protein sequence, read N- to C-terminus: UvrABC system protein C (631 aa).

Residues 1-20 (MKNETEAVADQPPKTGPVKP) form a disordered region. A GIY-YIG domain is found at 34–112 (MSPGVYRMLD…IKQLKPKFNV (79 aa)). A UVR domain is found at 222-257 (TDLQRQLADGMAAASEAMEFERAAALRDRIRALTNV).

This sequence belongs to the UvrC family. As to quaternary structure, interacts with UvrB in an incision complex.

The protein localises to the cytoplasm. The UvrABC repair system catalyzes the recognition and processing of DNA lesions. UvrC both incises the 5' and 3' sides of the lesion. The N-terminal half is responsible for the 3' incision and the C-terminal half is responsible for the 5' incision. The protein is UvrABC system protein C of Jannaschia sp. (strain CCS1).